We begin with the raw amino-acid sequence, 979 residues long: Translation initiation factor IF-2 (979 aa).

A compositionally biased stretch (basic and acidic residues) spans 50–77; that stretch reads LKRSHGQSDDSARKKITLTKRETSEIRQ. The tract at residues 50 to 385 is disordered; it reads LKRSHGQSDD…GKHNADDARS (336 aa). Residues 78 to 87 show a composition bias toward polar residues; the sequence is SDSTGKTRTV. Basic and acidic residues-rich tracts occupy residues 98-109, 121-142, and 149-173; these read IKRDDVESHGDG, EEVRRDEEQRREQAEALARQEA, and EAAEREEAERRAKQEALEAEQRRQA. Residues 174–192 show a composition bias toward low complexity; that stretch reads ELLAQKAAEEAAAAQAAAD. Basic and acidic residues-rich tracts occupy residues 196–211, 219–263, and 280–291; these read ETAREKAEEDKARLAT, NADD…EAEA, and PSERKAEEKKAE. Low complexity predominate over residues 317 to 327; that stretch reads APAATTTTAAA. Residues 351 to 368 are compositionally biased toward gly residues; the sequence is GGGLKTRGDSSGGVGGWR. The tr-type G domain maps to 479-646; it reads PRPPVVTVMG…NVLLQAEVLE (168 aa). Residues 488-495 form a G1 region; the sequence is GHVDHGKT. A GTP-binding site is contributed by 488–495; sequence GHVDHGKT. The interval 513–517 is G2; that stretch reads GITQH. The segment at 534–537 is G3; that stretch reads DTPG. GTP is bound by residues 534–538 and 588–591; these read DTPGH and TKVD. A G4 region spans residues 588 to 591; sequence TKVD. The tract at residues 624 to 626 is G5; that stretch reads SAK.

Belongs to the TRAFAC class translation factor GTPase superfamily. Classic translation factor GTPase family. IF-2 subfamily.

The protein resides in the cytoplasm. One of the essential components for the initiation of protein synthesis. Protects formylmethionyl-tRNA from spontaneous hydrolysis and promotes its binding to the 30S ribosomal subunits. Also involved in the hydrolysis of GTP during the formation of the 70S ribosomal complex. In Cupriavidus metallidurans (strain ATCC 43123 / DSM 2839 / NBRC 102507 / CH34) (Ralstonia metallidurans), this protein is Translation initiation factor IF-2.